The chain runs to 465 residues: Mothers against decapentaplegic homolog 5 (465 aa).

Thr2 bears the N-acetylthreonine mark. Residues 13–137 (PAVKRLLGWK…YKRVESPVLP (125 aa)) form the MH1 domain. Residues Cys65, Cys110, Cys122, and His127 each coordinate Zn(2+). Positions 163 to 249 (NEPHMPQNAT…PMDTSNNMIP (87 aa)) are disordered. Positions 169–182 (QNATFPDSFHQPNN) are enriched in polar residues. A compositionally biased stretch (pro residues) spans 186–197 (PLSPNSPYPPSP). The span at 198 to 214 (ASSTYPNSPASSGPGSP) shows a compositional bias: low complexity. Polar residues predominate over residues 234–249 (GQDNSQPMDTSNNMIP). The MH2 domain maps to 271–465 (WCSIVYYELN…SPLNPISSVS (195 aa)). Phosphoserine occurs at positions 463 and 465.

This sequence belongs to the dwarfin/SMAD family. As to quaternary structure, homodimer. Forms trimers with the co-SMAD SMAD4. Interacts with PEBP2-alpha subunit and SMURF1. Interacts with SUV39H1 and SUV39H2. Interacts (via MH2 domain) with LEMD3. Interacts with WWP1. Interacts with TMEM119. Interacts with ZNF8. Interacts with RANBP3L. Interacts with HK1. Interacts with HGS; this interaction attenuates BMP signaling. In terms of processing, phosphorylated on serine by BMP (bone morphogenetic proteins) type 1 receptor kinase. Ubiquitin-mediated proteolysis by SMAD-specific E3 ubiquitin ligase SMURF1. As to expression, ubiquitous.

It localises to the cytoplasm. Its subcellular location is the nucleus. The protein resides in the mitochondrion. Its function is as follows. Transcriptional regulator that plays a role in various cellular processes including embryonic development, cell differentiation, angiogenesis and tissue homeostasis. Upon BMP ligand binding to their receptors at the cell surface, is phosphorylated by activated type I BMP receptors (BMPRIs) and associates with SMAD4 to form a heteromeric complex which translocates into the nucleus acting as transcription factor. In turn, the hetero-trimeric complex recognizes cis-regulatory elements containing Smad Binding Elements (SBEs) to modulate the outcome of the signaling network. Non-phosphorylated SMAD5 has a cytoplasmic role in energy metabolism regulation by promoting mitochondrial respiration and glycolysis in response to cytoplasmic pH changes. Mechanistically, interacts with hexokinase 1/HK1 and thereby accelerates glycolysis. The polypeptide is Mothers against decapentaplegic homolog 5 (SMAD5) (Homo sapiens (Human)).